The chain runs to 155 residues: 6,7-dimethyl-8-ribityllumazine synthase (155 aa).

5-amino-6-(D-ribitylamino)uracil contacts are provided by residues Phe-24, 58-60 (AFE), and 82-84 (AII). 87 to 88 (ST) contributes to the (2S)-2-hydroxy-3-oxobutyl phosphate binding site. Residue His-90 is the Proton donor of the active site. Phe-115 is a 5-amino-6-(D-ribitylamino)uracil binding site. Arg-129 contacts (2S)-2-hydroxy-3-oxobutyl phosphate.

The protein belongs to the DMRL synthase family.

It carries out the reaction (2S)-2-hydroxy-3-oxobutyl phosphate + 5-amino-6-(D-ribitylamino)uracil = 6,7-dimethyl-8-(1-D-ribityl)lumazine + phosphate + 2 H2O + H(+). It participates in cofactor biosynthesis; riboflavin biosynthesis; riboflavin from 2-hydroxy-3-oxobutyl phosphate and 5-amino-6-(D-ribitylamino)uracil: step 1/2. Its function is as follows. Catalyzes the formation of 6,7-dimethyl-8-ribityllumazine by condensation of 5-amino-6-(D-ribitylamino)uracil with 3,4-dihydroxy-2-butanone 4-phosphate. This is the penultimate step in the biosynthesis of riboflavin. The chain is 6,7-dimethyl-8-ribityllumazine synthase from Chlorobium phaeobacteroides (strain BS1).